The primary structure comprises 393 residues: 1-deoxy-D-xylulose 5-phosphate reductoisomerase (393 aa).

Residues T16, G17, S18, I19, A42, R43, N44, and N127 each coordinate NADPH. K128 contributes to the 1-deoxy-D-xylulose 5-phosphate binding site. E129 contributes to the NADPH binding site. D153 is a Mn(2+) binding site. 1-deoxy-D-xylulose 5-phosphate-binding residues include S154, E155, S179, and H202. E155 provides a ligand contact to Mn(2+). An NADPH-binding site is contributed by G208. S215, N220, K221, and E224 together coordinate 1-deoxy-D-xylulose 5-phosphate. E224 is a Mn(2+) binding site.

The protein belongs to the DXR family. The cofactor is Mg(2+). Requires Mn(2+) as cofactor.

The catalysed reaction is 2-C-methyl-D-erythritol 4-phosphate + NADP(+) = 1-deoxy-D-xylulose 5-phosphate + NADPH + H(+). The protein operates within isoprenoid biosynthesis; isopentenyl diphosphate biosynthesis via DXP pathway; isopentenyl diphosphate from 1-deoxy-D-xylulose 5-phosphate: step 1/6. Functionally, catalyzes the NADPH-dependent rearrangement and reduction of 1-deoxy-D-xylulose-5-phosphate (DXP) to 2-C-methyl-D-erythritol 4-phosphate (MEP). This chain is 1-deoxy-D-xylulose 5-phosphate reductoisomerase, found in Jannaschia sp. (strain CCS1).